Consider the following 3305-residue polypeptide: Microtubule-actin cross-linking factor 1, isoforms 6/7 (3305 aa).

Disordered stretches follow at residues 1 to 24, 108 to 140, 152 to 202, 239 to 272, 333 to 381, 941 to 1007, and 2865 to 2896; these read MGKPLSRPDCLRRNPTCLGKGEDE, VQKSAPVPPRRRPNAERKDNVNRRSWKSFMPPN, LSEV…KSVD, AAASGNTDEMQEHRFSSATWPRAMKSSSKGGFSE, EEWE…VAVS, EPAI…PEWS, and SVEPTHAPFMEKSRSGSRKSLNQPTPPPMPIL. The span at 120–129 shows a compositional bias: basic and acidic residues; the sequence is PNAERKDNVN. 2 EF-hand domains span residues 2958 to 2993 and 2994 to 3029; these read HKKSRVMDFFRRIDKDQDGKITRQEFIDGILASKFP and TTKLEMTAVADIFDRDGDGYIDYYEFVAALHPNKDA. Ca(2+)-binding residues include Asp-2971, Asp-2973, Asp-2975, Lys-2977, Glu-2982, Asp-3007, Asp-3009, Asp-3011, Tyr-3013, and Glu-3018. The GAR domain maps to 3034 to 3106; the sequence is TDADKIEDEV…EFLVKNDPCR (73 aa). The tract at residues 3122 to 3305 is disordered; that stretch reads PEGASQGMTP…ASPRTPGPKR (184 aa). Low complexity predominate over residues 3142 to 3176; the sequence is SSRAASPTRSSSSASQSNHSCTSMPSSPATPASGT. The span at 3193–3212 shows a compositional bias: polar residues; that stretch reads FHSSRTSLAGDTSNSSSPAS. Residues 3227 to 3241 are compositionally biased toward low complexity; the sequence is SRPGSRAGSRAGSRA. Polar residues predominate over residues 3256–3266; the sequence is ETQSACSDTSE. Residues 3267–3278 are compositionally biased toward low complexity; sequence SSAAGGQGSSRR.

The protein resides in the cytoplasm. The protein localises to the cytoskeleton. The sequence is that of Microtubule-actin cross-linking factor 1, isoforms 6/7 from Mus musculus (Mouse).